A 201-amino-acid polypeptide reads, in one-letter code: ATP synthase subunit b 2 (201 aa).

Residues Met-1–Thr-17 show a composition bias toward polar residues. The tract at residues Met-1–Ala-39 is disordered. A helical membrane pass occupies residues Thr-47–Met-66.

This sequence belongs to the ATPase B chain family. F-type ATPases have 2 components, F(1) - the catalytic core - and F(0) - the membrane proton channel. F(1) has five subunits: alpha(3), beta(3), gamma(1), delta(1), epsilon(1). F(0) has three main subunits: a(1), b(2) and c(10-14). The alpha and beta chains form an alternating ring which encloses part of the gamma chain. F(1) is attached to F(0) by a central stalk formed by the gamma and epsilon chains, while a peripheral stalk is formed by the delta and b chains.

It is found in the cell inner membrane. Its function is as follows. F(1)F(0) ATP synthase produces ATP from ADP in the presence of a proton or sodium gradient. F-type ATPases consist of two structural domains, F(1) containing the extramembraneous catalytic core and F(0) containing the membrane proton channel, linked together by a central stalk and a peripheral stalk. During catalysis, ATP synthesis in the catalytic domain of F(1) is coupled via a rotary mechanism of the central stalk subunits to proton translocation. Component of the F(0) channel, it forms part of the peripheral stalk, linking F(1) to F(0). The b'-subunit is a diverged and duplicated form of b found in plants and photosynthetic bacteria. The sequence is that of ATP synthase subunit b 2 (atpF2) from Methylorubrum extorquens (strain PA1) (Methylobacterium extorquens).